Here is a 515-residue protein sequence, read N- to C-terminus: Glucose-6-phosphate 1-dehydrogenase (515 aa).

Alanine 2 carries the post-translational modification N-acetylalanine. A Phosphoserine modification is found at serine 8. Threonine 10 is modified (phosphothreonine). 38 to 45 (GASGDLAK) provides a ligand contact to NADP(+). Lysine 89 carries the post-translational modification N6-acetyllysine. 2 residues coordinate NADP(+): tyrosine 147 and lysine 171. Residues lysine 171, 201–205 (HYLGK), glutamate 239, and glutamate 258 each bind D-glucose 6-phosphate. Lysine 171 is subject to N6-(2-hydroxyisobutyryl)lysine; alternate. An N6-acetyllysine; alternate modification is found at lysine 171. NADP(+) is bound at residue arginine 357. 2 residues coordinate D-glucose 6-phosphate: lysine 360 and arginine 365. NADP(+) contacts are provided by lysine 366, arginine 370, and arginine 393. Residue glutamine 395 coordinates D-glucose 6-phosphate. NADP(+)-binding positions include 401-403 (YTK) and 421-423 (DLT). Lysine 403 bears the N6-acetyllysine mark. N6-acetyllysine is present on lysine 432. Arginine 487 serves as a coordination point for NADP(+). The residue at position 497 (lysine 497) is an N6-acetyllysine. NADP(+) contacts are provided by tyrosine 503 and tryptophan 509. At tyrosine 503 the chain carries Phosphotyrosine.

Belongs to the glucose-6-phosphate dehydrogenase family. Homotetramer; dimer of dimers. Interacts with SIRT2; the interaction is enhanced by H(2)O(2) treatment. Forms a ternary complex with ALDOB and TP53; this interaction is direct. ALDOB stabilizes the complex inhibiting G6PD activity and keeping oxidative pentose phosphate metabolism in check. In terms of processing, acetylated by ELP3 at Lys-403; acetylation inhibits its homodimerization and enzyme activity. Deacetylated by SIRT2 at Lys-403; deacetylation stimulates its enzyme activity.

It is found in the cytoplasm. The protein resides in the cytosol. Its subcellular location is the membrane. The enzyme catalyses D-glucose 6-phosphate + NADP(+) = 6-phospho-D-glucono-1,5-lactone + NADPH + H(+). It functions in the pathway carbohydrate degradation; pentose phosphate pathway; D-ribulose 5-phosphate from D-glucose 6-phosphate (oxidative stage): step 1/3. In terms of biological role, cytosolic glucose-6-phosphate dehydrogenase that catalyzes the first and rate-limiting step of the oxidative branch within the pentose phosphate pathway/shunt, an alternative route to glycolysis for the dissimilation of carbohydrates and a major source of reducing power and metabolic intermediates for fatty acid and nucleic acid biosynthetic processes. In Bos indicus (Zebu), this protein is Glucose-6-phosphate 1-dehydrogenase (G6PD).